Here is a 525-residue protein sequence, read N- to C-terminus: MAGLWLGLVWQKLLLWGAASAVSLAGASLVLSLLQRVASYARKWQQMRPIPTVARAYPLVGHALLMKRDGREFFQQIIEYTEEYRHMPLLKLWVGPVPMVALYNAENVEVILTSSRQIDKSSMYKFLEPWLGLGLLTSTGNKWRSRRKMLTPTFHFTILEDFLDIMNEQANILVKKLEKHVNQEAFNCFFYITLCALDIICETAMGKNIGAQSNDDSEYVRAVYRMSQMIFQRIKMPWLWLDLWYLMFKEGWEHEKGLKILHTFTNNVIAERANEMNADEDCRGVGRGSAPSKNKRRAFLDLLLSVTDDEGNRLSHEDIREEVDTFMFEGHDTTAAAINWSLYLLGCNPEVQQKVDHELDDVFGKSDRPATVEDLKKLRYLECVIKETLRLFPSVPLFARSVSEDCEVAGYRVLKGTEAVIIPYALHRDPRYFPNPEEFQPERFFPENAQGRHPYAYVPFSAGPRNCIGQKFAVMEEKTILSCILRHFWIESNQKREELGLEGQLILRPSNGIWIKLKRRDADEP.

The helical transmembrane segment at 13-33 threads the bilayer; it reads LLLWGAASAVSLAGASLVLSL. Heme-binding residues include E329 and C467.

Belongs to the cytochrome P450 family. Heme is required as a cofactor.

The protein localises to the endoplasmic reticulum membrane. It carries out the reaction dodecanoate + reduced [NADPH--hemoprotein reductase] + O2 = 12-hydroxydodecanoate + oxidized [NADPH--hemoprotein reductase] + H2O + H(+). It catalyses the reaction tetradecanoate + reduced [NADPH--hemoprotein reductase] + O2 = 14-hydroxytetradecanoate + oxidized [NADPH--hemoprotein reductase] + H2O + H(+). The enzyme catalyses hexadecanoate + reduced [NADPH--hemoprotein reductase] + O2 = 16-hydroxyhexadecanoate + oxidized [NADPH--hemoprotein reductase] + H2O + H(+). The catalysed reaction is (5Z,8Z,11Z,14Z,17Z)-eicosapentaenoate + reduced [NADPH--hemoprotein reductase] + O2 = 20-hydroxy-(5Z,8Z,11Z,14Z,17Z)-eicosapentaenoate + oxidized [NADPH--hemoprotein reductase] + H2O + H(+). It carries out the reaction (4Z,7Z,10Z,13Z,16Z,19Z)-docosahexaenoate + reduced [NADPH--hemoprotein reductase] + O2 = 22-hydroxy-(4Z,7Z,10Z,13Z,16Z,19Z)-docosahexaenoate + oxidized [NADPH--hemoprotein reductase] + H2O + H(+). Its pathway is lipid metabolism; fatty acid metabolism. Inhibited by N-hydroxy-N'-(4-n-butyl-2-methylphenyl formamidine)(HET0016) with an IC(50) of 38 nM. Functionally, a cytochrome P450 monooxygenase involved in fatty acid metabolism in the eye. Catalyzes the omega-hydroxylation of polyunsaturated fatty acids (PUFAs) docosahexaenoate (DHA) and its precursor eicosapentaenoate (EPA), and may contribute to the homeostasis of these retinal PUFAs. Omega hydroxylates saturated fatty acids such as laurate, myristate and palmitate, the catalytic efficiency decreasing in the following order: myristate &gt; laurate &gt; palmitate (C14&gt;C12&gt;C16). Mechanistically, uses molecular oxygen inserting one oxygen atom into a substrate, and reducing the second into a water molecule, with two electrons provided by NADPH via cytochrome P450 reductase (CPR; NADPH-ferrihemoprotein reductase). The protein is Cytochrome P450 4V2 (CYP4V2) of Pongo abelii (Sumatran orangutan).